Reading from the N-terminus, the 318-residue chain is NADH-ubiquinone oxidoreductase chain 1 (318 aa).

The next 8 helical transmembrane spans lie at 2–22 (FMANLLLVILPALVAMAFLTL), 69–89 (MLYLTAPALALSIALLLWTPL), 98–118 (FNLGLLFILATSSLAVYSILW), 140–160 (ISYEVTLAIILLSVLLMSGSF), 171–191 (HSWLLFPSWPLAMMWFTSTLA), 222–242 (LFFMGEYMNIIMMNALTTTIF), 253–273 (ETYSINFMAKALLLTTLFLWI), and 285–305 (LMHLLWKNFLPLTLALCMWYI).

Belongs to the complex I subunit 1 family. As to quaternary structure, core subunit of respiratory chain NADH dehydrogenase (Complex I) which is composed of 45 different subunits.

It is found in the mitochondrion inner membrane. The enzyme catalyses a ubiquinone + NADH + 5 H(+)(in) = a ubiquinol + NAD(+) + 4 H(+)(out). Core subunit of the mitochondrial membrane respiratory chain NADH dehydrogenase (Complex I) which catalyzes electron transfer from NADH through the respiratory chain, using ubiquinone as an electron acceptor. Essential for the catalytic activity and assembly of complex I. This chain is NADH-ubiquinone oxidoreductase chain 1 (MT-ND1), found in Saguinus leucopus (Silvery-brown bare-face tamarin).